We begin with the raw amino-acid sequence, 491 residues long: HEPACAM family member 2 (491 aa).

The signal sequence occupies residues 1-18 (MWLRVFTAFLSFTAGACS). N-linked (GlcNAc...) asparagine glycosylation is found at N73, N117, and N153. 2 Ig-like C2-type domains span residues 137 to 221 (PVVQ…SDII) and 223 to 319 (PTIY…THFT). Disulfide bonds link C158–C207 and C258–C303. N308 is a glycosylation site (N-linked (GlcNAc...) asparagine). A helical membrane pass occupies residues 340–360 (LASITGISLFLIISMCLLFLW). Residues 361–491 (KKFQPYKVIK…GKHSRAKQCI (131 aa)) lie on the Cytoplasmic side of the membrane. A compositionally biased stretch (polar residues) spans 444-454 (QQQDHPESSSQ). Disordered stretches follow at residues 444-466 (QQQDHPESSSQDGEEDACLDRHD) and 472-491 (ELGHCKEQDKGKHSRAKQCI). A compositionally biased stretch (basic and acidic residues) spans 472–482 (ELGHCKEQDKG).

In terms of processing, poly-ADP-ribosylated (PARsylated) by tankyrase TNKS during late G2 and prophase, leading to translocation to mitotic centrosomes. N-glycosylated.

It is found in the golgi apparatus membrane. Its subcellular location is the cytoplasm. The protein localises to the cytoskeleton. The protein resides in the spindle. It localises to the microtubule organizing center. It is found in the centrosome. Its subcellular location is the midbody. Its function is as follows. Required during prometaphase for centrosome maturation. Following poly-ADP-ribosylation (PARsylation) by TNKS, translocates from the Golgi apparatus to mitotic centrosomes and plays a key role in the formation of robust microtubules for prompt movement of chromosomes: anchors AKAP9/CG-NAP, a scaffold protein of the gamma-tubulin ring complex and promotes centrosome maturation. The polypeptide is HEPACAM family member 2 (HEPACAM2) (Bos taurus (Bovine)).